The primary structure comprises 2126 residues: Phthioceranic/hydroxyphthioceranic acid synthase (2126 aa).

The Ketosynthase family 3 (KS3) domain occupies Val-24–Gln-447. Catalysis depends on Cys-196, which acts as the Acyl-thioester intermediate; for beta-ketoacyl synthase activity. Active-site for beta-ketoacyl synthase activity residues include His-331 and His-367. A linker domain (LD) region spans residues Pro-449–Asp-549. An acyltransferase (AT) region spans residues Arg-550–Glu-849. The active-site Acyl-ester intermediate; for acyltransferase activity is the Ser-641. The tract at residues Ser-909–Thr-1191 is dehydratase (DH). The N-terminal hotdog fold stretch occupies residues His-914–Val-1032. A PKS/mFAS DH domain is found at His-914–Lys-1198. His-947 functions as the Proton acceptor; for dehydratase activity in the catalytic mechanism. The C-terminal hotdog fold stretch occupies residues Pro-1051–Lys-1198. The Proton donor; for dehydratase activity role is filled by Asp-1115. The pseudo beta-ketoacyl reductase (PsiKR) stretch occupies residues Lys-1227 to Asp-1398. The tract at residues Ser-1426–Ile-1750 is enoylreductase (ER). Residues Gly-1772–Phe-2019 are beta-ketoacyl reductase (KR). Residues Leu-1780 to Leu-1783, Ser-1803 to Gln-1806, Asp-1831 to Ile-1832, and Phe-1904 to Ser-1905 each bind NADP(+). Residues Asp-2040 to Gln-2126 form the Carrier domain. Residue Ser-2075 is modified to O-(pantetheine 4'-phosphoryl)serine.

Pantetheine 4'-phosphate serves as cofactor.

It catalyses the reaction hexadecanoyl-[(hydroxy)phthioceranic acid synthase] + 7 (S)-methylmalonyl-CoA + 14 NADPH + 21 H(+) = C37-phthioceranyl-[(hydroxy)phthioceranic acid synthase] + 7 CO2 + 14 NADP(+) + 7 CoA + 7 H2O. The catalysed reaction is hexadecanoyl-[(hydroxy)phthioceranic acid synthase] + 8 (S)-methylmalonyl-CoA + 16 NADPH + 24 H(+) = C40-phthioceranyl-[(hydroxy)phthioceranic acid synthase] + 8 CO2 + 16 NADP(+) + 8 CoA + 8 H2O. This Mycobacterium bovis (strain BCG / Pasteur 1173P2) protein is Phthioceranic/hydroxyphthioceranic acid synthase (pks2).